The primary structure comprises 70 residues: Large ribosomal subunit protein uL29 (70 aa).

It belongs to the universal ribosomal protein uL29 family.

This chain is Large ribosomal subunit protein uL29, found in Prochlorococcus marinus (strain MIT 9313).